Reading from the N-terminus, the 227-residue chain is Ribosomal RNA small subunit methyltransferase G (227 aa).

S-adenosyl-L-methionine contacts are provided by residues G81, L86, A131–E132, and R149.

Belongs to the methyltransferase superfamily. RNA methyltransferase RsmG family.

It is found in the cytoplasm. Functionally, specifically methylates the N7 position of guanine in position 518 of 16S rRNA. This is Ribosomal RNA small subunit methyltransferase G from Rhodococcus jostii (strain RHA1).